Reading from the N-terminus, the 218-residue chain is Transcription initiation factor TFIID subunit 10 (218 aa).

Low complexity-rich tracts occupy residues 1–21 and 29–39; these read MSCSGSGADPEAAPASAASAP and APAALPSSTAA. Residues 1-85 are disordered; it reads MSCSGSGADP…GAAPVSAGGA (85 aa). Serine 2 is subject to N-acetylserine. At serine 44 the chain carries Phosphoserine. Residue threonine 48 is modified to Phosphothreonine. Residues 48–62 show a composition bias toward gly residues; sequence TAGGPGAGAAAGGTG. A [KR]-[STA]-K motif motif is present at residues 187 to 189; sequence KSK. The residue at position 189 (lysine 189) is an Allysine; alternate. Lysine 189 carries the N6,N6,N6-trimethyllysine; alternate modification.

This sequence belongs to the TAF10 family. Component of the TFIID basal transcription factor complex, composed of TATA-box-binding protein TBP, and a number of TBP-associated factors (TAFs), including TAF1, TAF2, TAF3, TAF4, TAF5, TAF6, TAF7, TAF8, TAF9, TAF10, TAF11, TAF12 and TAF13. Component of the TATA-binding protein-free TAF complex (TFTC), the PCAF histone acetylase complex and the STAGA transcription coactivator-HAT complex. The PCAF complex consists at least of TADA2L/ADA2, TADA3L/ADA3, SUPT3H, TAF5L TAF6L, TAF9, TAF10, TAF12 and TRRAP. The TFTC-HAT complex consists at least of TAF5L, TAF6L, TADA3L, SUPT3H, TAF2, TAF4, TAF5, GCN5L2/GCN5, TAF10 and TRRAP. The STAGA transcription coactivator-HAT complex consists at least of SUPT3H, GCN5L2, TAF5L, TAF6L, SUPT7L, TADA3L, TAD1L, TAF10, TAF12, TRRAP and TAF9. The STAGA core complex is associated with a subcomplex required for histone deubiquitination composed of ATXN7L3, ENY2 and USP22. Interacts with TAF3. Interacts with LOXL2. Interacts with TAF12 isoform TAFII20; the interaction is direct. Monomethylated at Lys-189 by SETD7, leading to increased affinity for RNA polymerase II. Post-translationally, lysine deamination at Lys-189 to form allysine is mediated by LOXL2. Allysine formation by LOXL2 results in release of TAF10 from promoters, leading to inhibition of TFIID-dependent transcription.

The protein localises to the nucleus. In terms of biological role, the TFIID basal transcription factor complex plays a major role in the initiation of RNA polymerase II (Pol II)-dependent transcription. TFIID recognizes and binds promoters with or without a TATA box via its subunit TBP, a TATA-box-binding protein, and promotes assembly of the pre-initiation complex (PIC). The TFIID complex consists of TBP and TBP-associated factors (TAFs), including TAF1, TAF2, TAF3, TAF4, TAF5, TAF6, TAF7, TAF8, TAF9, TAF10, TAF11, TAF12 and TAF13. TAF10 is also component of the PCAF histone acetylase complex, the TATA-binding protein-free TAF complex (TFTC) and the STAGA transcription coactivator-HAT complex. May regulate cyclin E expression. This is Transcription initiation factor TFIID subunit 10 (TAF10) from Homo sapiens (Human).